We begin with the raw amino-acid sequence, 716 residues long: Delta-1-pyrroline-5-carboxylate synthase 1 (716 aa).

Positions 1–296 are glutamate 5-kinase; the sequence is MASVDPSRSF…WESSKDVSTR (296 aa). Ser-60, Asp-157, and Asn-176 together coordinate substrate. ATP-binding positions include 196–197, 202–207, and 236–242; these read SD, YSGPPS, and RGGMTAK. The tract at residues 297–716 is gamma-glutamyl phosphate reductase; the sequence is EMAVAARDCS…VYTHKSLPLQ (420 aa).

It in the N-terminal section; belongs to the glutamate 5-kinase family. This sequence in the C-terminal section; belongs to the gamma-glutamyl phosphate reductase family. As to expression, expressed at high levels in leaves.

It catalyses the reaction L-glutamate + ATP = L-glutamyl 5-phosphate + ADP. The enzyme catalyses L-glutamate 5-semialdehyde + phosphate + NADP(+) = L-glutamyl 5-phosphate + NADPH + H(+). Its pathway is amino-acid biosynthesis; L-proline biosynthesis; L-glutamate 5-semialdehyde from L-glutamate: step 1/2. The protein operates within amino-acid biosynthesis; L-proline biosynthesis; L-glutamate 5-semialdehyde from L-glutamate: step 2/2. Its activity is regulated as follows. Feedback regulated by proline. P5CS plays a key role in proline biosynthesis, leading to osmoregulation in plants. Involved in abiotic stress tolerance. In Oryza sativa subsp. japonica (Rice), this protein is Delta-1-pyrroline-5-carboxylate synthase 1.